Here is a 540-residue protein sequence, read N- to C-terminus: Chaperonin GroEL (540 aa).

ATP-binding positions include 29–32 (TLGP), 86–90 (DGTTT), Gly413, 477–479 (DAL), and Asp493.

The protein belongs to the chaperonin (HSP60) family. In terms of assembly, forms a cylinder of 14 subunits composed of two heptameric rings stacked back-to-back. Interacts with the co-chaperonin GroES.

Its subcellular location is the cytoplasm. The catalysed reaction is ATP + H2O + a folded polypeptide = ADP + phosphate + an unfolded polypeptide.. In terms of biological role, together with its co-chaperonin GroES, plays an essential role in assisting protein folding. The GroEL-GroES system forms a nano-cage that allows encapsulation of the non-native substrate proteins and provides a physical environment optimized to promote and accelerate protein folding. The protein is Chaperonin GroEL of Clostridium botulinum (strain Eklund 17B / Type B).